A 638-amino-acid polypeptide reads, in one-letter code: Chaperone protein DnaK (638 aa).

T197 bears the Phosphothreonine; by autocatalysis mark. The interval 598-638 (QQSAPSGAAAGPDEGAPSGSGGTSGTRGGDDVIDAEFTETK) is disordered. Residues 615–624 (SGSGGTSGTR) show a composition bias toward gly residues. Positions 628 to 638 (DVIDAEFTETK) are enriched in acidic residues.

Belongs to the heat shock protein 70 family.

Its function is as follows. Acts as a chaperone. In Gloeobacter violaceus (strain ATCC 29082 / PCC 7421), this protein is Chaperone protein DnaK.